We begin with the raw amino-acid sequence, 162 residues long: Ribosome maturation factor RimP (162 aa).

It belongs to the RimP family.

Its subcellular location is the cytoplasm. Required for maturation of 30S ribosomal subunits. The protein is Ribosome maturation factor RimP of Leptospira borgpetersenii serovar Hardjo-bovis (strain JB197).